Reading from the N-terminus, the 93-residue chain is Small ribosomal subunit protein uS19 (93 aa).

Belongs to the universal ribosomal protein uS19 family.

Its function is as follows. Protein S19 forms a complex with S13 that binds strongly to the 16S ribosomal RNA. The polypeptide is Small ribosomal subunit protein uS19 (Geobacter metallireducens (strain ATCC 53774 / DSM 7210 / GS-15)).